The chain runs to 394 residues: Acetate kinase (394 aa).

A Mg(2+)-binding site is contributed by N8. K15 is an ATP binding site. R86 is a binding site for substrate. D143 functions as the Proton donor/acceptor in the catalytic mechanism. ATP-binding positions include 201-205, 276-278, and 324-328; these read HLGNG, DCR, and GIGEN. E378 contacts Mg(2+).

This sequence belongs to the acetokinase family. As to quaternary structure, homodimer. The cofactor is Mg(2+). Mn(2+) is required as a cofactor.

The protein localises to the cytoplasm. It carries out the reaction acetate + ATP = acetyl phosphate + ADP. It participates in metabolic intermediate biosynthesis; acetyl-CoA biosynthesis; acetyl-CoA from acetate: step 1/2. Catalyzes the formation of acetyl phosphate from acetate and ATP. Can also catalyze the reverse reaction. The polypeptide is Acetate kinase (Dichelobacter nodosus (strain VCS1703A)).